Here is a 63-residue protein sequence, read N- to C-terminus: Sperm protamine P1 (63 aa).

The disordered stretch occupies residues 1 to 63 (MARYRRHSRS…RYSRRGRRRY (63 aa)).

The protein belongs to the protamine P1 family. Testis.

Its subcellular location is the nucleus. The protein resides in the chromosome. Its function is as follows. Protamines substitute for histones in the chromatin of sperm during the haploid phase of spermatogenesis. They compact sperm DNA into a highly condensed, stable and inactive complex. The sequence is that of Sperm protamine P1 (PRM1) from Sminthopsis griseoventer (Gray-bellied dunnart).